A 136-amino-acid polypeptide reads, in one-letter code: Histone H3 (136 aa).

Positions 1–43 (MARTKQTARKSTGGKAPRKQLASKAARKAAPSTGGVKKPHRYK) are disordered. Lysine 5 bears the N6,N6,N6-trimethyllysine; alternate mark. Lysine 5 is subject to N6,N6-dimethyllysine; alternate. An N6-methyllysine; alternate mark is found at lysine 5 and lysine 10. Lysine 10 carries the post-translational modification N6-acetyllysine; alternate. A Phosphoserine modification is found at serine 11. At lysine 15 the chain carries N6,N6-dimethyllysine; alternate. N6-acetyllysine; alternate is present on residues lysine 15, lysine 19, lysine 24, lysine 28, and lysine 37. Residues lysine 19, lysine 24, lysine 28, and lysine 37 each carry the N6-methyllysine; alternate modification. Residues lysine 28 and lysine 37 each carry the N6,N6,N6-trimethyllysine; alternate modification. An N6,N6-dimethyllysine; alternate mark is found at lysine 28 and lysine 37. 2 positions are modified to N6-acetyllysine: lysine 57 and lysine 65. Lysine 80 carries the post-translational modification N6,N6,N6-trimethyllysine; alternate. At lysine 80 the chain carries N6,N6-dimethyllysine; alternate. An N6-methyllysine; alternate modification is found at lysine 80.

This sequence belongs to the histone H3 family. In terms of assembly, the nucleosome is a histone octamer containing two molecules each of H2A, H2B, H3 and H4 assembled in one H3-H4 heterotetramer and two H2A-H2B heterodimers. The octamer wraps approximately 147 bp of DNA. Post-translationally, phosphorylated to form H3S10ph. H3S10ph promotes subsequent H3K14ac formation and is required for transcriptional activation through TBP recruitment to the promoters. In terms of processing, mono-, di- and trimethylated by the COMPASS complex to form H3K4me1/2/3. H3K4me activates gene expression by regulating transcription elongation and plays a role in telomere length maintenance. H3K4me enrichment correlates with transcription levels, and occurs in a 5' to 3' gradient with H3K4me3 enrichment at the 5'-end of genes, shifting to H3K4me2 and then H3K4me1. Methylated by set2 to form H3K36me. H3K36me represses gene expression. Methylated by dot1 to form H3K79me. H3K79me is required for association of SIR proteins with telomeric regions and for telomeric silencing. The COMPASS-mediated formation of H3K4me2/3 and the dot1-mediated formation of H3K79me require H2BK123ub1. Acetylation of histone H3 leads to transcriptional activation. H3K14ac formation by gcn5 is promoted by H3S10ph. H3K14ac can also be formed by esa1. H3K56ac formation occurs predominantly in newly synthesized H3 molecules during G1, S and G2/M of the cell cycle and may be involved in DNA repair.

The protein localises to the nucleus. It localises to the chromosome. Functionally, core component of nucleosome. Nucleosomes wrap and compact DNA into chromatin, limiting DNA accessibility to the cellular machineries which require DNA as a template. Histones thereby play a central role in transcription regulation, DNA repair, DNA replication and chromosomal stability. DNA accessibility is regulated via a complex set of post-translational modifications of histones, also called histone code, and nucleosome remodeling. The protein is Histone H3 (hht1) of Neosartorya fischeri (strain ATCC 1020 / DSM 3700 / CBS 544.65 / FGSC A1164 / JCM 1740 / NRRL 181 / WB 181) (Aspergillus fischerianus).